A 489-amino-acid polypeptide reads, in one-letter code: 3-octaprenyl-4-hydroxybenzoate carboxy-lyase (489 aa).

A Mn(2+)-binding site is contributed by asparagine 172. Prenylated FMN contacts are provided by residues 175-177 (IYR), 189-191 (RWL), and 194-195 (RG). Glutamate 238 serves as a coordination point for Mn(2+). The active-site Proton donor is the aspartate 287.

Belongs to the UbiD family. In terms of assembly, homohexamer. The cofactor is prenylated FMN. Requires Mn(2+) as cofactor.

Its subcellular location is the cell membrane. The enzyme catalyses a 4-hydroxy-3-(all-trans-polyprenyl)benzoate + H(+) = a 2-(all-trans-polyprenyl)phenol + CO2. Its pathway is cofactor biosynthesis; ubiquinone biosynthesis. Functionally, catalyzes the decarboxylation of 3-octaprenyl-4-hydroxy benzoate to 2-octaprenylphenol, an intermediate step in ubiquinone biosynthesis. In Tolumonas auensis (strain DSM 9187 / NBRC 110442 / TA 4), this protein is 3-octaprenyl-4-hydroxybenzoate carboxy-lyase.